Reading from the N-terminus, the 655-residue chain is D-xylonate dehydratase YagF (655 aa).

The protein belongs to the IlvD/Edd family.

It carries out the reaction D-xylonate = 2-dehydro-3-deoxy-D-arabinonate + H2O. Its function is as follows. Catalyzes the dehydration of D-xylonic acid to form 2-dehydro-3-deoxy-D-pentonate. This chain is D-xylonate dehydratase YagF (yagF), found in Escherichia coli (strain K12).